The primary structure comprises 341 residues: MKNKLLSAAIGAAVLAVGASAASATTLSDVKAKGFVQCGVNTGLTGFAAPDASGNWAGFDVDFCKAVASAVFGDPTKVKYTPTNAKERFTALQSGEIDVLSRNTTWTINRDTALGFNFRPVTYYDGQGFMVRKGLNVKSALELSGAAICVQSGTTTELNLADYFKTNNLQYNPVVFENLPEVNAAYDAGRCDVYTTDQSGLYSLRLTLKNPDEHIILPEIISKEPLGPAVRQGDDQWFDIVSWTAYALINAEEFGITQANVDEMKNSPNPDIKRFLGSETDTKIGTDLGLTNDWAANVIKGVGNYGEIFERNIGQGSPLKIARGLNALWNKGGIQYAPPVR.

The signal sequence occupies residues 1–23; that stretch reads MKNKLLSAAIGAAVLAVGASAAS.

It belongs to the bacterial solute-binding protein 3 family. The complex is composed of two ATP-binding proteins (AapP), two transmembrane proteins (AapM and AapQ) and a solute-binding protein (AapJ).

The protein localises to the periplasm. Functionally, part of the ABC transporter complex AapJQMP involved in uptake of L-amino acids. Affects the efflux of these amino acids as well. Essential for the development of bacteroids, the differentiated legume-symbiotic forms of this bacterium, and for the effective N(2) fixation by them. The sequence is that of General L-amino acid-binding periplasmic protein AapJ (aapJ) from Rhizobium johnstonii (strain DSM 114642 / LMG 32736 / 3841) (Rhizobium leguminosarum bv. viciae).